The sequence spans 212 residues: Ras-related protein Rab-15 (212 aa).

Serine 17, glycine 18, valine 19, glycine 20, lysine 21, threonine 22, cysteine 23, serine 35, serine 39, and threonine 40 together coordinate GTP. Residue threonine 22 participates in Mg(2+) binding. Short sequence motifs (switch) lie at residues 31-45 and 63-80; these read NEFH…GVDF and DTAG…YYRR. Positions 40 and 63 each coordinate Mg(2+). GTP contacts are provided by glycine 66, asparagine 121, lysine 122, aspartate 124, serine 151, and alanine 152. S-geranylgeranyl cysteine attachment occurs at residues cysteine 210 and cysteine 212. Cysteine 212 is subject to Cysteine methyl ester.

It belongs to the small GTPase superfamily. Rab family. As to quaternary structure, the GTP bound form of RAB15 interacts with REP15. Interacts (GTP-bound form) with MICAL1, MICAL3, MICALCL, EHBP1 and EHBP1L1. It depends on Mg(2+) as a cofactor. Expressed predominantly in neural tissues.

It is found in the cell membrane. It carries out the reaction GTP + H2O = GDP + phosphate + H(+). Its activity is regulated as follows. Regulated by guanine nucleotide exchange factors (GEFs) which promote the exchange of bound GDP for free GTP. Regulated by GTPase activating proteins (GAPs) which increase the GTP hydrolysis activity. Inhibited by GDP dissociation inhibitors (GDIs). Its function is as follows. The small GTPases Rab are key regulators of intracellular membrane trafficking, from the formation of transport vesicles to their fusion with membranes. Rabs cycle between an inactive GDP-bound form and an active GTP-bound form that is able to recruit to membranes different sets of downstream effectors directly responsible for vesicle formation, movement, tethering and fusion. RAB15 may act in concert with RAB3A in regulating aspects of synaptic vesicle membrane flow within the nerve terminal. In Rattus norvegicus (Rat), this protein is Ras-related protein Rab-15.